The chain runs to 311 residues: Alpha/beta hydrolase domain-containing protein 17C (311 aa).

The interval 48–67 (EAPASTAQQPPREEGSGEPA) is disordered. Residues S193, D258, and H287 each act as charge relay system in the active site.

The protein belongs to the AB hydrolase superfamily. ABHD17 family. Palmitoylated on cysteine residues located in a cysteine cluster at the N-terminus which promotes membrane localization.

It is found in the recycling endosome membrane. It localises to the cell projection. Its subcellular location is the dendritic spine. The protein localises to the postsynaptic density membrane. The catalysed reaction is S-hexadecanoyl-L-cysteinyl-[protein] + H2O = L-cysteinyl-[protein] + hexadecanoate + H(+). Its function is as follows. Hydrolyzes fatty acids from S-acylated cysteine residues in proteins. Has depalmitoylating activity towards NRAS. In Xenopus laevis (African clawed frog), this protein is Alpha/beta hydrolase domain-containing protein 17C.